The following is a 70-amino-acid chain: DNA gyrase inhibitor YacG (70 aa).

Zn(2+)-binding residues include Cys-9, Cys-12, Cys-28, and Cys-32. The disordered stretch occupies residues 43–70; it reads ESRKIPGSSIDPESIVTTNNKQDNVDEQ.

It belongs to the DNA gyrase inhibitor YacG family. In terms of assembly, interacts with GyrB. The cofactor is Zn(2+).

In terms of biological role, inhibits all the catalytic activities of DNA gyrase by preventing its interaction with DNA. Acts by binding directly to the C-terminal domain of GyrB, which probably disrupts DNA binding by the gyrase. The sequence is that of DNA gyrase inhibitor YacG from Legionella pneumophila (strain Corby).